We begin with the raw amino-acid sequence, 576 residues long: Acetylcholine receptor subunit alpha-like 2 (576 aa).

Residues 1 to 21 form the signal peptide; sequence MAPGCCTTRPRPIALLAHIWR. At 22–261 the chain is on the extracellular side; the sequence is HCKPLCLLLV…FFNITLRRKT (240 aa). N-linked (GlcNAc...) asparagine glycosylation is present at N65. Intrachain disulfides connect C169–C183 and C243–C244. The N-linked (GlcNAc...) asparagine glycan is linked to N254. 3 helical membrane-spanning segments follow: residues 262–285, 293–311, and 327–346; these read LFYT…VFYL, IALC…LLIS, and YLLF…IIIL. The Cytoplasmic segment spans residues 347–526; it reads NIHYRKPSTH…WGFVAMVMDR (180 aa). A helical membrane pass occupies residues 527–545; that stretch reads LFLWLFMIASLVGTFVILG. Residue N570 is glycosylated (N-linked (GlcNAc...) asparagine).

This sequence belongs to the ligand-gated ion channel (TC 1.A.9) family. Acetylcholine receptor (TC 1.A.9.1) subfamily. CNS in embryos.

It is found in the postsynaptic cell membrane. Its subcellular location is the cell membrane. Its function is as follows. After binding acetylcholine, the AChR responds by an extensive change in conformation that affects all subunits and leads to opening of an ion-conducting channel across the plasma membrane. The protein is Acetylcholine receptor subunit alpha-like 2 (nAChRalpha2) of Drosophila melanogaster (Fruit fly).